A 186-amino-acid polypeptide reads, in one-letter code: 2-oxoglutarate synthase subunit KorC (186 aa).

As to quaternary structure, heterotetramer of the KorA, KorB, KorC and KorD subunits.

The catalysed reaction is 2 oxidized [2Fe-2S]-[ferredoxin] + 2-oxoglutarate + CoA = succinyl-CoA + 2 reduced [2Fe-2S]-[ferredoxin] + CO2 + H(+). This chain is 2-oxoglutarate synthase subunit KorC (korC), found in Methanothermobacter marburgensis (strain ATCC BAA-927 / DSM 2133 / JCM 14651 / NBRC 100331 / OCM 82 / Marburg) (Methanobacterium thermoautotrophicum).